The primary structure comprises 424 residues: ATP-sensitive inward rectifier potassium channel 8 (424 aa).

Over 1-69 the chain is Cytoplasmic; it reads MLARKSIIPE…IFTTLVDLKW (69 aa). Phosphoserine is present on Ser-6. A helical transmembrane segment spans residues 70–94; the sequence is RHTLVIFTMSFLCSWLLFAIMWWLV. Topologically, residues 95–126 are extracellular; that stretch reads AFAHGDIYAYMEKGITEKSGLESAVCVTNVRS. Positions 127-138 form an intramembrane region, helical; Pore-forming; that stretch reads FTSAFLFSIEVQ. The pore-forming intramembrane region spans 139 to 145; it reads VTIGFGG. Positions 140–145 match the Selectivity filter motif; it reads TIGFGG. Over 146–154 the chain is Extracellular; it reads RMMTEECPL. A helical membrane pass occupies residues 155 to 176; that stretch reads AITVLILQNIVGLIINAVMLGC. The Cytoplasmic portion of the chain corresponds to 177–424; the sequence is IFMKTAQAHR…PEGNQCPSES (248 aa). The segment at 374-424 is disordered; sequence LSHQNSLRKRNSMRRNNSMRRSNSIRRNNSSLMVPKVQFMTPEGNQCPSES. Residues 387–404 are compositionally biased toward low complexity; sequence RRNNSMRRSNSIRRNNSS.

The protein belongs to the inward rectifier-type potassium channel (TC 1.A.2.1) family. KCNJ8 subfamily. As to quaternary structure, interacts with ABCC9. Widely expressed, including in pancreatic islets, pituitary, skeletal muscle and heart.

It is found in the membrane. It carries out the reaction K(+)(in) = K(+)(out). In terms of biological role, inward rectifier potassium channels are characterized by a greater tendency to allow potassium to flow into the cell rather than out of it. Their voltage dependence is regulated by the concentration of extracellular potassium; as external potassium is raised, the voltage range of the channel opening shifts to more positive voltages. The inward rectification is mainly due to the blockage of outward current by internal magnesium. This channel is activated by internal ATP and can be blocked by external barium. Can form a sulfonyllurea-sensitive but ATP-insensitive potassium channel with ABCC9. This Rattus norvegicus (Rat) protein is ATP-sensitive inward rectifier potassium channel 8 (Kcnj8).